A 306-amino-acid chain; its full sequence is MWFRNLLVYRLTQDLQLDADSLEKALGEKSARPCASQELTTYGFTAPFGKGPDAPLVHVSQDFFLISARKEERILPGSVVRDALKEKVDEIEAQQMRKVYKKERDQLKDEIVQTLLPRAFIRRSSTFAAIAPSLGLILVDSASAKKAEDLLSTLREALGSLPVRPLSVKVAPTATLTDWVKTQEAAGDFHVLDECELRDTHEDGGVVRCKRQDLTSEEIQLHLTAGKLVTQLSLAWSDKLSFVLDDKLAVKRLRFEDLLQEQAEKDGGEDALGQLDASFTLMMLTFAEFLPALFEALGGEEIPQGV.

This sequence belongs to the RdgC family.

The protein localises to the cytoplasm. Its subcellular location is the nucleoid. May be involved in recombination. In Pseudomonas aeruginosa (strain ATCC 15692 / DSM 22644 / CIP 104116 / JCM 14847 / LMG 12228 / 1C / PRS 101 / PAO1), this protein is Recombination-associated protein RdgC.